A 372-amino-acid chain; its full sequence is Transcription factor YY2 (372 aa).

Residues 32 to 102 (MEDIPTESVQ…SDNQLGNDLE (71 aa)) are mediates transcriptional activation. Over residues 126–136 (SAASTSTSTQS) the composition is skewed to low complexity. 2 disordered regions span residues 126-172 (SAAS…WEQK) and 186-210 (TMWSPNDNNDQGAVGEGQAENPPDY). Basic residues predominate over residues 137–146 (RSKKPSKKPS). 2 stretches are compositionally biased toward polar residues: residues 154-165 (EANPAGSSSSLG) and 186-196 (TMWSPNDNNDQ). The mediates transcriptional repression stretch occupies residues 237 to 372 (EFTKVKPKRS…LTHVKTKNNP (136 aa)). C2H2-type zinc fingers lie at residues 254–278 (VPCSYSGCEKMFRDYAAMRKHLHIH), 283–305 (HVCAECGKAFLESSKLRRHQLVH), 311–335 (FQCTFEGCGKRFSLDFNLRTHLRIH), and 341–365 (FVCPFDVCNRKFAQSTNLKTHILTH).

Belongs to the YY transcription factor family. As to expression, expressed in kidney, liver, spleen and testis but not in colon.

The protein resides in the nucleus. In terms of biological role, functions as a multifunctional transcription factor that may exhibit positive and negative control on a large number of genes. May antagonize YY1 and function in development and differentiation. The chain is Transcription factor YY2 (YY2) from Homo sapiens (Human).